Reading from the N-terminus, the 241-residue chain is Ureidoacrylate amidohydrolase RutB (241 aa).

Asp38 acts as the Proton acceptor in catalysis. Lys147 is an active-site residue. The Nucleophile role is filled by Cys180.

The protein belongs to the isochorismatase family. RutB subfamily.

It catalyses the reaction (Z)-3-ureidoacrylate + H2O + H(+) = (Z)-3-aminoacrylate + NH4(+) + CO2. The enzyme catalyses (Z)-3-ureidoacrylate + H2O = (Z)-3-aminoacrylate + carbamate + H(+). The catalysed reaction is (Z)-2-methylureidoacrylate + H2O + H(+) = (Z)-2-methylaminoacrylate + NH4(+) + CO2. In terms of biological role, hydrolyzes ureidoacrylate to form aminoacrylate and carbamate. The carbamate hydrolyzes spontaneously, thereby releasing one of the nitrogen atoms of the pyrimidine ring as ammonia and one of its carbon atoms as CO2. This Haliangium ochraceum (strain DSM 14365 / JCM 11303 / SMP-2) protein is Ureidoacrylate amidohydrolase RutB.